A 421-amino-acid chain; its full sequence is Medium-chain specific acyl-CoA dehydrogenase, mitochondrial (421 aa).

The transit peptide at 1-25 directs the protein to the mitochondrion; the sequence is MAAMFRRSCRVLRSLSHFGWRSQHT. K79 carries the N6-acetyllysine modification. 158–167 lines the FAD pocket; the sequence is YCVTEPGAGS. S167 lines the octanoyl-CoA pocket. Position 179 is an N6-succinyllysine (K179). 191-193 lines the FAD pocket; it reads WIT. K212 is subject to N6-acetyllysine; alternate. At K212 the chain carries N6-succinyllysine; alternate. S216 contributes to the octanoyl-CoA binding site. K217, K259, and K271 each carry N6-acetyllysine; alternate. An N6-succinyllysine; alternate mark is found at K217, K259, and K271. An octanoyl-CoA-binding site is contributed by D278. Residue K279 is modified to N6-acetyllysine. R281 serves as a coordination point for octanoyl-CoA. K301 carries the N6-acetyllysine modification. Residues 306–308 and 316–317 contribute to the FAD site; these read RKT and HQ. Positions 349 and 351 each coordinate octanoyl-CoA. The residue at position 351 (T351) is a Phosphothreonine. 374 to 378 is an FAD binding site; it reads QVFGG. E401 contacts octanoyl-CoA. E401 (proton acceptor) is an active-site residue. 402-405 is an FAD binding site; sequence GTAQ.

It belongs to the acyl-CoA dehydrogenase family. Homotetramer. Interacts with the heterodimeric electron transfer flavoprotein ETF. FAD serves as cofactor. Post-translationally, acetylated. Could occur at proximity of the cofactor-binding sites and reduce the catalytic activity. Could be deacetylated by SIRT3.

It localises to the mitochondrion matrix. It carries out the reaction a medium-chain 2,3-saturated fatty acyl-CoA + oxidized [electron-transfer flavoprotein] + H(+) = a medium-chain (2E)-enoyl-CoA + reduced [electron-transfer flavoprotein]. It catalyses the reaction pentanoyl-CoA + oxidized [electron-transfer flavoprotein] + H(+) = (2E)-pentenoyl-CoA + reduced [electron-transfer flavoprotein]. The catalysed reaction is hexanoyl-CoA + oxidized [electron-transfer flavoprotein] + H(+) = (2E)-hexenoyl-CoA + reduced [electron-transfer flavoprotein]. The enzyme catalyses octanoyl-CoA + oxidized [electron-transfer flavoprotein] + H(+) = (2E)-octenoyl-CoA + reduced [electron-transfer flavoprotein]. It carries out the reaction decanoyl-CoA + oxidized [electron-transfer flavoprotein] + H(+) = (2E)-decenoyl-CoA + reduced [electron-transfer flavoprotein]. It catalyses the reaction dodecanoyl-CoA + oxidized [electron-transfer flavoprotein] + H(+) = (2E)-dodecenoyl-CoA + reduced [electron-transfer flavoprotein]. The catalysed reaction is tetradecanoyl-CoA + oxidized [electron-transfer flavoprotein] + H(+) = (2E)-tetradecenoyl-CoA + reduced [electron-transfer flavoprotein]. The enzyme catalyses oxidized [electron-transfer flavoprotein] + hexadecanoyl-CoA + H(+) = (2E)-hexadecenoyl-CoA + reduced [electron-transfer flavoprotein]. It functions in the pathway lipid metabolism; mitochondrial fatty acid beta-oxidation. Functionally, medium-chain specific acyl-CoA dehydrogenase is one of the acyl-CoA dehydrogenases that catalyze the first step of mitochondrial fatty acid beta-oxidation, an aerobic process breaking down fatty acids into acetyl-CoA and allowing the production of energy from fats. The first step of fatty acid beta-oxidation consists in the removal of one hydrogen from C-2 and C-3 of the straight-chain fatty acyl-CoA thioester, resulting in the formation of trans-2-enoyl-CoA. Electron transfer flavoprotein (ETF) is the electron acceptor that transfers electrons to the main mitochondrial respiratory chain via ETF-ubiquinone oxidoreductase (ETF dehydrogenase). Among the different mitochondrial acyl-CoA dehydrogenases, medium-chain specific acyl-CoA dehydrogenase acts specifically on acyl-CoAs with saturated 6 to 12 carbons long primary chains. The chain is Medium-chain specific acyl-CoA dehydrogenase, mitochondrial from Sus scrofa (Pig).